Reading from the N-terminus, the 473-residue chain is Hyaluronidase-2 (473 aa).

Positions 1–20 are cleaved as a signal peptide; the sequence is MRAGLGPIITLALVLEVAWA. Disulfide bonds link Cys-47-Cys-340 and Cys-211-Cys-227. Residues Asn-74 and Asn-103 are each glycosylated (N-linked (GlcNAc...) asparagine). Residue Glu-135 is the Proton donor of the active site. The N-linked (GlcNAc...) asparagine glycan is linked to Asn-357. The EGF-like domain maps to 361-439; the sequence is ATQYCSWTQC…YLGWGGEQCQ (79 aa). 3 disulfides stabilise this stretch: Cys-365–Cys-376, Cys-370–Cys-427, and Cys-429–Cys-438. Residue Asn-390 is glycosylated (N-linked (GlcNAc...) asparagine). Asn-448 carries GPI-anchor amidated asparagine; alternate lipidation. N-linked (GlcNAc...) asparagine; alternate glycosylation is present at Asn-448. Residues 449 to 473 constitute a propeptide, removed in mature form; the sequence is ASRAWAGSHLTSLLGLVAVALTWTL.

Belongs to the glycosyl hydrolase 56 family. Interacts with MST1R. In terms of tissue distribution, widely expressed, with highest expression levels in kidney, lung and liver (at protein level).

The protein resides in the cell membrane. The catalysed reaction is Random hydrolysis of (1-&gt;4)-linkages between N-acetyl-beta-D-glucosamine and D-glucuronate residues in hyaluronate.. In terms of biological role, catalyzes hyaluronan degradation into small fragments that are endocytosed and degraded in lysosomes by HYAL1 and exoglycosidases. Essential for the breakdown of extracellular matrix hyaluronan. The sequence is that of Hyaluronidase-2 (Hyal2) from Mus musculus (Mouse).